A 257-amino-acid chain; its full sequence is Mitochondrial distribution and morphology protein 12 (257 aa).

An SMP-LTD domain is found at 1–256 (MSFEINWEKL…WPSWVNLDFN (256 aa)). Positions 74 to 98 (YEEDNETSSEMHGRDGQNVGESGEE) are disordered.

Belongs to the MDM12 family. As to quaternary structure, component of the ER-mitochondria encounter structure (ERMES) or MDM complex, composed of MMM1, MDM10, MDM12 and MDM34. An MMM1 homodimer associates with one molecule of MDM12 on each side in a pairwise head-to-tail manner, and the SMP-LTD domains of MMM1 and MDM12 generate a continuous hydrophobic tunnel for phospholipid trafficking.

The protein localises to the mitochondrion outer membrane. It is found in the endoplasmic reticulum membrane. Functionally, component of the ERMES/MDM complex, which serves as a molecular tether to connect the endoplasmic reticulum (ER) and mitochondria. Components of this complex are involved in the control of mitochondrial shape and protein biogenesis, and function in nonvesicular lipid trafficking between the ER and mitochondria. MDM12 is required for the interaction of the ER-resident membrane protein MMM1 and the outer mitochondrial membrane-resident beta-barrel protein MDM10. The MDM12-MMM1 subcomplex functions in the major beta-barrel assembly pathway that is responsible for biogenesis of all mitochondrial outer membrane beta-barrel proteins, and acts in a late step after the SAM complex. The MDM10-MDM12-MMM1 subcomplex further acts in the TOM40-specific pathway after the action of the MDM12-MMM1 complex. Essential for establishing and maintaining the structure of mitochondria and maintenance of mtDNA nucleoids. The sequence is that of Mitochondrial distribution and morphology protein 12 from Candida glabrata (strain ATCC 2001 / BCRC 20586 / JCM 3761 / NBRC 0622 / NRRL Y-65 / CBS 138) (Yeast).